Reading from the N-terminus, the 547-residue chain is CTP synthase (547 aa).

Residues 1–273 are amidoligase domain; the sequence is MNNKKLKSKF…DHFILNHFQL (273 aa). CTP is bound at residue S19. S19 lines the UTP pocket. An ATP-binding site is contributed by 20–25; it reads SLGKGI. Y60 is an L-glutamine binding site. ATP is bound at residue D77. Residues D77 and E147 each contribute to the Mg(2+) site. CTP is bound by residues 154–156, 194–199, and K230; these read DIE and KTKPTQ. UTP is bound by residues 194-199 and K230; that span reads KTKPTQ. One can recognise a Glutamine amidotransferase type-1 domain in the interval 306 to 539; sequence YVILHDAYLS…VEAALLKNGK (234 aa). L-glutamine is bound at residue G361. C388 functions as the Nucleophile; for glutamine hydrolysis in the catalytic mechanism. L-glutamine-binding positions include 389–392, E412, and R466; that span reads FGMQ. Active-site residues include H512 and E514.

This sequence belongs to the CTP synthase family. As to quaternary structure, homotetramer.

The catalysed reaction is UTP + L-glutamine + ATP + H2O = CTP + L-glutamate + ADP + phosphate + 2 H(+). It carries out the reaction L-glutamine + H2O = L-glutamate + NH4(+). It catalyses the reaction UTP + NH4(+) + ATP = CTP + ADP + phosphate + 2 H(+). Its pathway is pyrimidine metabolism; CTP biosynthesis via de novo pathway; CTP from UDP: step 2/2. Its activity is regulated as follows. Allosterically activated by GTP, when glutamine is the substrate; GTP has no effect on the reaction when ammonia is the substrate. The allosteric effector GTP functions by stabilizing the protein conformation that binds the tetrahedral intermediate(s) formed during glutamine hydrolysis. Inhibited by the product CTP, via allosteric rather than competitive inhibition. Its function is as follows. Catalyzes the ATP-dependent amination of UTP to CTP with either L-glutamine or ammonia as the source of nitrogen. Regulates intracellular CTP levels through interactions with the four ribonucleotide triphosphates. This chain is CTP synthase, found in Phytoplasma australiense.